Here is a 203-residue protein sequence, read N- to C-terminus: MAKLYFNYATMNAGKTTMLLQASYNYRERGMTTMLFVAGHYRKGDSGLISSRIGLETEAEMFRDGDDLFARVAEHHDHTTVHCVFVDEAQFLEEEQVWQLARIADRLNIPVMCYGLRTDFQGKLFSGSRALLAIADDLREVRTICRCGRKATMVVRLGADGKVARQGEQVAIGKDVYVSLCRRHWEEEMGRAAPDDFIGFMKS.

Residues 9 to 16 and 87 to 90 contribute to the ATP site; these read ATMNAGKT and DEAQ. Residue glutamate 88 is the Proton acceptor of the active site. The Zn(2+) site is built by cysteine 145, cysteine 147, cysteine 181, and histidine 184.

Belongs to the thymidine kinase family. In terms of assembly, homotetramer.

The protein resides in the cytoplasm. The enzyme catalyses thymidine + ATP = dTMP + ADP + H(+). The protein is Thymidine kinase of Mesorhizobium japonicum (strain LMG 29417 / CECT 9101 / MAFF 303099) (Mesorhizobium loti (strain MAFF 303099)).